The sequence spans 319 residues: HTH-type transcriptional regulator YidZ (319 aa).

The HTH lysR-type domain maps to 8–65 (LDLNLLLCLQLLMQERSVTKAAKRMNVTPSAVSKSLAKLRAWFDDPLFVNSPLGLSPT). Residues 25–44 (VTKAAKRMNVTPSAVSKSLA) constitute a DNA-binding region (H-T-H motif).

The protein belongs to the LysR transcriptional regulatory family.

Functionally, involved in anaerobic NO protection. The polypeptide is HTH-type transcriptional regulator YidZ (Escherichia coli O157:H7 (strain EC4115 / EHEC)).